Here is a 131-residue protein sequence, read N- to C-terminus: MAKINKGYVANFIEENGFPEQGHFEEKKDLQAFYKHLSTEQLEEWVELEGLEVKDTDSDSIYRMRLCMAILYLNFPKKTAGKKKASPYKHISLEELVQMATDNDIEVKHTDSDKILRMRTIMALKEAGKLG.

The protein is Putative gene 51 protein (51) of Bacillus phage SP01 (Bacteriophage SP01).